Consider the following 141-residue polypeptide: Hemoglobin subunit alpha (141 aa).

Positions valine 1–arginine 141 constitute a Globin domain. A Phosphoserine modification is found at serine 3. Lysine 7 carries the N6-succinyllysine modification. The residue at position 8 (threonine 8) is a Phosphothreonine. An N6-succinyllysine modification is found at lysine 11. Residue lysine 16 is modified to N6-acetyllysine; alternate. Lysine 16 is subject to N6-succinyllysine; alternate. Tyrosine 24 carries the post-translational modification Phosphotyrosine. The residue at position 35 (serine 35) is a Phosphoserine. Lysine 40 is modified (N6-succinyllysine). At serine 49 the chain carries Phosphoserine. Histidine 58 lines the O2 pocket. Position 87 (histidine 87) interacts with heme b. Serine 102 carries the post-translational modification Phosphoserine. Threonine 108 is modified (phosphothreonine). Serine 124 bears the Phosphoserine mark. A phosphothreonine mark is found at threonine 134 and threonine 137. Phosphoserine is present on serine 138.

It belongs to the globin family. As to quaternary structure, heterotetramer of two alpha chains and two beta chains. Red blood cells.

In terms of biological role, involved in oxygen transport from the lung to the various peripheral tissues. Its function is as follows. Hemopressin acts as an antagonist peptide of the cannabinoid receptor CNR1. Hemopressin-binding efficiently blocks cannabinoid receptor CNR1 and subsequent signaling. This is Hemoglobin subunit alpha (HBA) from Vulpes vulpes (Red fox).